Reading from the N-terminus, the 311-residue chain is Progestin and adipoQ receptor family member 3 (311 aa).

Positions 1–20 (MHQKLLKSAHYIELGSYQYW) are required for interaction with SREBF2. Over 1–70 (MHQKLLKSAH…KSLFILSNET (70 aa)) the chain is Cytoplasmic. Residues 41–60 (KDNPYITDGYRAYLPSRLCI) are required for interaction with SCAP. Residues 61 to 71 (KSLFILSNETV) form a golgi targeting region. A helical membrane pass occupies residues 71-91 (VNIWSHLLGFFLFFTLGIYDM). At 92–104 (TSVLPSASASRED) the chain is on the lumenal side. The helical transmembrane segment at 105–125 (FVICSICLFCFQVCMLCSVGY) threads the bilayer. At 126 to 145 (HLFSCHRSEKTCRRWMALDY) the chain is on the cytoplasmic side. The helical transmembrane segment at 146 to 166 (AGISIGILGCYVSGVFYAFYC) threads the bilayer. At 167-172 (NNYWRQ) the chain is on the lumenal side. A helical membrane pass occupies residues 173–193 (VYLITVLAMILAVFFAQIHPS). The Cytoplasmic portion of the chain corresponds to 194-203 (YLTQQWQRLR). The chain crosses the membrane as a helical span at residues 204-224 (PIIFCSVSGYGVIPTLHWVWL). At 225–235 (NGGVSAPIVQD) the chain is on the lumenal side. Residues 236–256 (FAPRVIVMYVIALLAFLFYIS) traverse the membrane as a helical segment. The Cytoplasmic segment spans residues 257 to 275 (KVPERYFPGQLNYLGSSHQ). A helical transmembrane segment spans residues 276 to 296 (IWHVLAVVMLYWWHQSTVYVM). The Lumenal segment spans residues 297 to 311 (QYRHSKPCPDYVSHL). The segment at 299–303 (RHSKP) is golgi targeting.

The protein belongs to the ADIPOR family. As to quaternary structure, interacts with SCAP and SREBF2; the interactions are direct, increase in low cholesterol conditions and tether SCAP:SREBP complex to the Golgi apparatus. Interaction with SCAP is mutually exclusive with INSIG1. In hepatocytes, interacts with PPARA and HUWE1; the interactions promote PPARA poylubiquitination and HUWE1-mediated degradation. In macrophages, interacts with PPARG and STUB1; the interactions promote PPARG poylubiquitination and STUB1-mediated degradation.

It is found in the golgi apparatus membrane. Golgi-anchored protein which modulates its interactors acitivies by tethering them to the Golgi apparatus. Functions as a spatial regulator of RAF1 kinase by sequestrating it to the Golgi apparatus. Acts as a positive regulator of cholesterol biosynthesis by mediating the anchoring of the SCAP:SREBP complex in the Golgi apparatus, thereby promoting SCAP:SREBF2 complex formation, potentiating SREBF2 and SREBF1 processing and enhancing lipid synthesis. Also regulates PPARA and PPARG functions by mediating their interaction with E3 ubiquitin ligases, such as STUB1 or HUWE1, leading to their polyubiquitination and proteasome-mediated degradation. The chain is Progestin and adipoQ receptor family member 3 from Mus musculus (Mouse).